The following is a 309-amino-acid chain: Porphobilinogen deaminase (309 aa).

Cys244 is modified (S-(dipyrrolylmethanemethyl)cysteine).

It belongs to the HMBS family. As to quaternary structure, monomer. Dipyrromethane is required as a cofactor.

The enzyme catalyses 4 porphobilinogen + H2O = hydroxymethylbilane + 4 NH4(+). It participates in porphyrin-containing compound metabolism; protoporphyrin-IX biosynthesis; coproporphyrinogen-III from 5-aminolevulinate: step 2/4. Its function is as follows. Tetrapolymerization of the monopyrrole PBG into the hydroxymethylbilane pre-uroporphyrinogen in several discrete steps. The sequence is that of Porphobilinogen deaminase from Listeria monocytogenes serotype 4a (strain HCC23).